Consider the following 2270-residue polypeptide: Protein DOP1B (2270 aa).

Disordered stretches follow at residues 548–572, 697–716, and 1084–1145; these read METP…VEGE, LKQR…TEEE, and QEQD…DMPR. Residues 1095-1145 are compositionally biased toward polar residues; that stretch reads ADTSTGHNDSDNTSSFTPSSVDLSSDQNYRDNTAGQVTHKNTGQQNMDMPR.

Belongs to the DOP1 family.

The protein localises to the golgi apparatus membrane. In terms of biological role, may be involved in protein traffic between late Golgi and early endosomes. This chain is Protein DOP1B (dop1b), found in Xenopus laevis (African clawed frog).